A 647-amino-acid chain; its full sequence is Microtubule-associated protein 9 (647 aa).

Ser-2 bears the N-acetylserine mark. At Tyr-12 the chain carries Phosphotyrosine. Disordered stretches follow at residues Lys-127–Met-323, Ser-344–Ala-421, Lys-491–Gln-514, Lys-530–Lys-553, Asn-580–Ile-600, and Gln-613–Phe-647. A compositionally biased stretch (basic and acidic residues) spans Gln-133–Lys-145. Residues Ile-155–Leu-166 are compositionally biased toward polar residues. Residues Pro-174 to Ser-186 show a composition bias toward basic residues. A coiled-coil region spans residues Lys-184–Ala-210. Residues His-187–Ala-200 are compositionally biased toward basic and acidic residues. Composition is skewed to polar residues over residues Ala-210 to Gly-219 and Cys-239 to Lys-249. Over residues Asp-268 to Glu-287 the composition is skewed to basic and acidic residues. Residues Ala-298 to Thr-328 adopt a coiled-coil conformation. Low complexity predominate over residues Asn-365 to Arg-374. The stretch at Met-443 to Glu-628 forms a coiled coil.

As to quaternary structure, binds to purified microtubules via its C-terminus.

The protein resides in the cytoplasm. The protein localises to the cytoskeleton. It localises to the spindle. Functionally, involved in organization of the bipolar mitotic spindle. Required for bipolar spindle assembly, mitosis progression and cytokinesis. May act by stabilizing interphase microtubules. The polypeptide is Microtubule-associated protein 9 (MAP9) (Homo sapiens (Human)).